Reading from the N-terminus, the 375-residue chain is Carbamoyl phosphate synthase small chain (375 aa).

The segment at 1-180 (MSKALLVLED…DAYVVEPKGK (180 aa)) is CPSase. L-glutamine contacts are provided by Ser-46, Gly-232, and Gly-234. The Glutamine amidotransferase type-1 domain maps to 184–375 (TVAALDLGIK…SFVELMAAQR (192 aa)). The active-site Nucleophile is the Cys-260. Residues Phe-261, Gln-264, Asn-302, Gly-304, and Phe-305 each contribute to the L-glutamine site. Catalysis depends on residues His-350 and Glu-352.

It belongs to the CarA family. Composed of two chains; the small (or glutamine) chain promotes the hydrolysis of glutamine to ammonia, which is used by the large (or ammonia) chain to synthesize carbamoyl phosphate. Tetramer of heterodimers (alpha,beta)4.

The enzyme catalyses hydrogencarbonate + L-glutamine + 2 ATP + H2O = carbamoyl phosphate + L-glutamate + 2 ADP + phosphate + 2 H(+). It catalyses the reaction L-glutamine + H2O = L-glutamate + NH4(+). The protein operates within amino-acid biosynthesis; L-arginine biosynthesis; carbamoyl phosphate from bicarbonate: step 1/1. Its pathway is pyrimidine metabolism; UMP biosynthesis via de novo pathway; (S)-dihydroorotate from bicarbonate: step 1/3. Its function is as follows. Small subunit of the glutamine-dependent carbamoyl phosphate synthetase (CPSase). CPSase catalyzes the formation of carbamoyl phosphate from the ammonia moiety of glutamine, carbonate, and phosphate donated by ATP, constituting the first step of 2 biosynthetic pathways, one leading to arginine and/or urea and the other to pyrimidine nucleotides. The small subunit (glutamine amidotransferase) binds and cleaves glutamine to supply the large subunit with the substrate ammonia. The chain is Carbamoyl phosphate synthase small chain from Mycobacterium leprae (strain TN).